A 305-amino-acid polypeptide reads, in one-letter code: DNA-directed RNA polymerase 35 kDa subunit (305 aa).

Belongs to the poxviridae DNA-directed RNA polymerase 35 kDa subunit family. In terms of assembly, the DNA-dependent RNA polymerase used for intermediate and late genes expression consists of eight subunits 147 kDa, 133 kDa, 35 kDa, 30 kDa, 22 kDa, 19 kDa, 18 kDa and 7 kDa totalling more than 500 kDa in mass. The same holoenzyme, with the addition of the transcription-specificity factor RAP94, is used for early gene expression.

The protein resides in the virion. It catalyses the reaction RNA(n) + a ribonucleoside 5'-triphosphate = RNA(n+1) + diphosphate. Part of the DNA-dependent RNA polymerase which catalyzes the transcription of viral DNA into RNA using the four ribonucleoside triphosphates as substrates. Responsible for the transcription of early, intermediate and late genes. DNA-dependent RNA polymerase associates with the early transcription factor (ETF) thereby allowing the early genes transcription. Late transcription, and probably also intermediate transcription, require newly synthesized RNA polymerase. In Rabbitpox virus (strain Utrecht) (RPV), this protein is DNA-directed RNA polymerase 35 kDa subunit (RPO35).